We begin with the raw amino-acid sequence, 350 residues long: tRNA uridine(34) hydroxylase (350 aa).

The Rhodanese domain occupies 146–240 (DDPDAIFIDM…YARRAREQGL (95 aa)). Cysteine 200 serves as the catalytic Cysteine persulfide intermediate. Positions 318-350 (QRRRRAGREKGNKIFNKSRGRLNSKLGIPDPTE) are disordered.

Belongs to the TrhO family.

The enzyme catalyses uridine(34) in tRNA + AH2 + O2 = 5-hydroxyuridine(34) in tRNA + A + H2O. Functionally, catalyzes oxygen-dependent 5-hydroxyuridine (ho5U) modification at position 34 in tRNAs. This chain is tRNA uridine(34) hydroxylase, found in Salmonella arizonae (strain ATCC BAA-731 / CDC346-86 / RSK2980).